Reading from the N-terminus, the 290-residue chain is Porphobilinogen deaminase (290 aa).

Position 237 is an S-(dipyrrolylmethanemethyl)cysteine (C237).

This sequence belongs to the HMBS family. As to quaternary structure, monomer. The cofactor is dipyrromethane.

The enzyme catalyses 4 porphobilinogen + H2O = hydroxymethylbilane + 4 NH4(+). It participates in porphyrin-containing compound metabolism; protoporphyrin-IX biosynthesis; coproporphyrinogen-III from 5-aminolevulinate: step 2/4. Tetrapolymerization of the monopyrrole PBG into the hydroxymethylbilane pre-uroporphyrinogen in several discrete steps. This chain is Porphobilinogen deaminase, found in Clostridium kluyveri (strain NBRC 12016).